We begin with the raw amino-acid sequence, 669 residues long: MATERSRSAMDSPVPASMFAPEPSSPGAARAAAAAARLHGGFDSDCSEDGEALNGEPELDLTSKLVLVSPTSEQYDSLLRQMWERMDEGCGETIYVIGQGSDGTEYGLSEADMEASYATVKSMAEQIEADVILLRERQEAGGRVRDYLVRKRVGDNDFLEVRVAVVGNVDAGKSTLLGVLTHGELDNGRGFARQKLFRHKHEIESGRTSSVGNDILGFDSEGNVVNKPDSHGGSLEWTKICEKSTKVITFIDLAGHEKYLKTTVFGMTGHLPDFCMLMVGSNAGIVGMTKEHLGLALALNVPVFVVVTKIDMCPANILQETLKLLQRLLKSPGCRKIPVLVQSKDDVIVTASNFSSERMCPIFQISNVTGENLDLLKMFLNLLSPRTSYREEEPAEFQIDDTYSVPGVGTVVSGTTLRGLIKLNDTLLLGPDPLGNFLSIAVKSIHRKRMPVKEVRGGQTASFALKKIKRSSIRKGMVMVSPRLNPQASWEFEAEILVLHHPTTISPRYQAMVHCGSIRQTATILSMDKDCLRTGDKATVHFRFIKTPEYLHIDQRLVFREGRTKAVGTITKLLQTTNNSPMNSKPQQIKMQSTKKGPLTKRDEGGPSGGPAVGAPPPGDEASSVGAGQPAASSNLQPQPKPSSGGRRRGGQRHKVKSQGACVTPASGC.

The interval 1–32 (MATERSRSAMDSPVPASMFAPEPSSPGAARAA) is disordered. Serine 6, serine 8, serine 12, serine 24, serine 25, serine 44, serine 47, and serine 69 each carry phosphoserine. Residues 158–389 (FLEVRVAVVG…LNLLSPRTSY (232 aa)) form the tr-type G domain. The tract at residues 167-174 (GNVDAGKS) is G1. 167–174 (GNVDAGKS) is a binding site for GTP. Residues 206-210 (GRTSS) form a G2 region. Residues 252–255 (DLAG) form a G3 region. Residues 252 to 256 (DLAGH) and 308 to 311 (TKID) each bind GTP. The interval 308 to 311 (TKID) is G4. Residues 366–368 (SNV) form a G5 region. The span at 573–595 (LLQTTNNSPMNSKPQQIKMQSTK) shows a compositional bias: polar residues. The segment at 573–669 (LLQTTNNSPM…GACVTPASGC (97 aa)) is disordered. Position 580 is a phosphoserine (serine 580). A compositionally biased stretch (basic residues) spans 646-657 (GRRRGGQRHKVK).

This sequence belongs to the TRAFAC class translation factor GTPase superfamily. Classic translation factor GTPase family. GTPBP1 subfamily. In terms of assembly, interacts with EXOSC2/RRP4, EXOSC3/RRP40, EXOSC5/RRP46, HNRNPD, HNRNPR and SYNCRIP. Identified in a complex with AANAT mRNA, but does not bind mRNA by itself.

It localises to the cytoplasm. Its function is as follows. Promotes degradation of target mRNA species. Plays a role in the regulation of circadian mRNA stability. Binds GTP and has GTPase activity. The chain is GTP-binding protein 1 (GTPBP1) from Homo sapiens (Human).